A 520-amino-acid chain; its full sequence is 5'-nucleotidase domain-containing protein 2 (520 aa).

Asp73 functions as the Nucleophile in the catalytic mechanism. Positions 73, 75, and 358 each coordinate Mg(2+). Asp75 acts as the Proton donor in catalysis.

Belongs to the 5'(3')-deoxyribonucleotidase family. Interacts with tyrosine 3-monooxygenase TH; the interaction results in reduced phosphorylation and decreased catalytic activity of TH.

The protein resides in the cytoplasm. Its function is as follows. Promotes dephosphorylation of tyrosine 3-monooxygenase TH which decreases TH catalytic activity and leads to reduced synthesis of catecholamines including dopamine, noradrenaline and adrenaline. The exact mechanism of activity is unknown but may act as a phosphatase or promote the activity of phosphatases or may inhibit phosphorylation by acting as a barrier to interfere with protein kinase access. The chain is 5'-nucleotidase domain-containing protein 2 (NT5DC2) from Homo sapiens (Human).